A 426-amino-acid polypeptide reads, in one-letter code: D-cysteine desulfhydrase 1, mitochondrial (426 aa).

The N-terminal 63 residues, 1-63 (MARGAHQAPG…IGSFLSKRPY (63 aa)), are a transit peptide targeting the mitochondrion. K119 is modified (N6-(pyridoxal phosphate)lysine). S146 acts as the Nucleophile in catalysis.

The protein belongs to the ACC deaminase/D-cysteine desulfhydrase family. Homodimer. Requires pyridoxal 5'-phosphate as cofactor. Present in seeds (at protein level).

Its subcellular location is the mitochondrion. It carries out the reaction D-cysteine + H2O = hydrogen sulfide + pyruvate + NH4(+) + H(+). Inhibited by L-cysteine (L-cys). Functionally, catalyzes the production of hydrogen sulfide (H2S) from D-cysteine (D-cys). This chain is D-cysteine desulfhydrase 1, mitochondrial, found in Oryza sativa subsp. japonica (Rice).